A 262-amino-acid polypeptide reads, in one-letter code: Light-harvesting complex-like protein 3 isotype 1, chloroplastic (262 aa).

Residues 1 to 39 (MALFSPPISSSSLQNPNFIPKFSFSLLSSNRFSLLSVTR) constitute a chloroplast transit peptide. 2 helical membrane passes run 180–200 (AAMI…VGLV) and 202–222 (QMGN…VLFI).

As to quaternary structure, interacts with GGR. Forms homodimer, and heterodimer with LIL3.2. Expressed in photosynthetically active tissues (at protein level).

The protein resides in the plastid. The protein localises to the chloroplast thylakoid membrane. Light-harvesting-like protein required for biosynthesis of phytylated chlorophylls and alpha-tocopherol in green seedlings. Functions by anchoring geranylgeranyl reductase (GGR) in the thylakoid membrane, leading to the stabilization of GGR activity. Binds chlorophyll a in the thylakoid membrane. Plays a role in the regulation of chlorophyll biosynthesis under light stress and under standard growth conditions. This chain is Light-harvesting complex-like protein 3 isotype 1, chloroplastic (LIL3.1), found in Arabidopsis thaliana (Mouse-ear cress).